The sequence spans 397 residues: Mannonate dehydratase 2 (397 aa).

The protein belongs to the mannonate dehydratase family. It depends on Fe(2+) as a cofactor. Mn(2+) serves as cofactor.

It carries out the reaction D-mannonate = 2-dehydro-3-deoxy-D-gluconate + H2O. It participates in carbohydrate metabolism; pentose and glucuronate interconversion. Its function is as follows. Catalyzes the dehydration of D-mannonate. The protein is Mannonate dehydratase 2 (uxuA2) of Agrobacterium fabrum (strain C58 / ATCC 33970) (Agrobacterium tumefaciens (strain C58)).